A 1124-amino-acid chain; its full sequence is Probable leucine-rich repeat receptor-like protein kinase At2g33170 (1124 aa).

A signal peptide spans 1-32 (MGWWIFEFKKESKSMFVGVLFLLTLLVWTSES). At 33–752 (LNSDGQFLLE…LKAGSARRGR (720 aa)) the chain is on the extracellular side. Residues N72, N96, and N131 are each glycosylated (N-linked (GlcNAc...) asparagine). 26 LRR repeats span residues 86–109 (VVTSLDLSSMNLSGIVSPSIGGLV), 110–132 (NLVYLNLAYNALTGDIPREIGNC), 134–156 (KLEVMFLNNNQFGGSIPVEINKL), 158–180 (QLRSFNICNNKLSGPLPEEIGDL), 182–205 (NLEELVAYTNNLTGPLPRSLGNLN), 206–228 (KLTTFRAGQNDFSGNIPTEIGKC), 230–252 (NLKLLGLAQNFISGELPKEIGML), 254–277 (KLQEVILWQNKFSGFIPKDIGNLT), 278–300 (SLETLALYGNSLVGPIPSEIGNM), 302–325 (SLKKLYLYQNQLNGTIPKELGKLS), 326–348 (KVMEIDFSENLLSGEIPVELSKI), 350–371 (ELRLLYLFQNKLTGIIPNELSK), 374–397 (NLAKLDLSINSLTGPIPPGFQNLT), 398–420 (SMRQLQLFHNSLSGVIPQGLGLY), 422–444 (PLWVVDFSENQLSGKIPPFICQQ), 446–468 (NLILLNLGSNRIFGNIPPGVLRC), 470–491 (SLLQLRVVGNRLTGQFPTELCK), 494–516 (NLSAIELDQNRFSGPLPPEIGTC), 518–540 (KLQRLHLAANQFSSNLPNEISKL), 542–564 (NLVTFNVSSNSLTGPIPSEIANC), 566–588 (MLQRLDLSRNSFIGSLPPELGSL), 590–613 (QLEILRLSENRFSGNIPFTIGNLT), 614–636 (HLTELQMGGNLFSGSIPPQLGLL), 638–661 (SLQIAMNLSYNDFSGEIPPEIGNL), 663–686 (LLMYLSLNNNHLSGEIPTTFENLS), and 687–709 (SLLGCNFSYNNLTGQLPHTQIFQ). N192 carries an N-linked (GlcNAc...) asparagine glycan. N-linked (GlcNAc...) asparagine glycosylation is present at N275. N314 is a glycosylation site (N-linked (GlcNAc...) asparagine). N395 carries an N-linked (GlcNAc...) asparagine glycan. A glycan (N-linked (GlcNAc...) asparagine) is linked at N494. N-linked (GlcNAc...) asparagine glycosylation occurs at N547. N611 carries an N-linked (GlcNAc...) asparagine glycan. N-linked (GlcNAc...) asparagine glycosylation is found at N644, N684, N692, N697, and N710. The chain crosses the membrane as a helical span at residues 753–773 (IIIIVSSVIGGISLLLIAIVV). Over 774–1124 (HFLRNPVEPT…CSDLPPPAPP (351 aa)) the chain is Cytoplasmic. Phosphothreonine occurs at positions 808 and 816. Residues 819–1100 (FHDSYIVGRG…TMREVVLMLI (282 aa)) enclose the Protein kinase domain. ATP is bound by residues 825–833 (VGRGACGTV) and K847. Phosphotyrosine occurs at positions 901 and 939. The active-site Proton acceptor is D952. S986 bears the Phosphoserine mark. 2 positions are modified to phosphotyrosine: Y994 and Y1001. The residue at position 1002 (T1002) is a Phosphothreonine.

This sequence belongs to the protein kinase superfamily. Ser/Thr protein kinase family.

It is found in the membrane. The catalysed reaction is L-seryl-[protein] + ATP = O-phospho-L-seryl-[protein] + ADP + H(+). It catalyses the reaction L-threonyl-[protein] + ATP = O-phospho-L-threonyl-[protein] + ADP + H(+). The protein is Probable leucine-rich repeat receptor-like protein kinase At2g33170 of Arabidopsis thaliana (Mouse-ear cress).